Consider the following 80-residue polypeptide: Exodeoxyribonuclease 7 small subunit (80 aa).

The protein belongs to the XseB family. As to quaternary structure, heterooligomer composed of large and small subunits.

It localises to the cytoplasm. It catalyses the reaction Exonucleolytic cleavage in either 5'- to 3'- or 3'- to 5'-direction to yield nucleoside 5'-phosphates.. Its function is as follows. Bidirectionally degrades single-stranded DNA into large acid-insoluble oligonucleotides, which are then degraded further into small acid-soluble oligonucleotides. The sequence is that of Exodeoxyribonuclease 7 small subunit from Enterobacter sp. (strain 638).